A 367-amino-acid chain; its full sequence is D-alanine--D-alanine ligase (367 aa).

The ATP-grasp domain occupies 150–357 (KKLLASAGLP…YPTLLATMVE (208 aa)). 178–233 (RERLGLPVFVKPSRGGSSIGVSRVTAWDELPAAIELARRHDPKVIIEAAVPGRELE) serves as a coordination point for ATP. Residues aspartate 312, glutamate 324, and asparagine 326 each contribute to the Mg(2+) site.

Belongs to the D-alanine--D-alanine ligase family. It depends on Mg(2+) as a cofactor. Mn(2+) serves as cofactor.

The protein localises to the cytoplasm. The catalysed reaction is 2 D-alanine + ATP = D-alanyl-D-alanine + ADP + phosphate + H(+). It participates in cell wall biogenesis; peptidoglycan biosynthesis. Functionally, cell wall formation. This chain is D-alanine--D-alanine ligase, found in Mycolicibacterium gilvum (strain PYR-GCK) (Mycobacterium gilvum (strain PYR-GCK)).